A 482-amino-acid polypeptide reads, in one-letter code: 3-isopropylmalate dehydratase large subunit (482 aa).

Cys-353, Cys-414, and Cys-417 together coordinate [4Fe-4S] cluster.

The protein belongs to the aconitase/IPM isomerase family. LeuC type 1 subfamily. As to quaternary structure, heterodimer of LeuC and LeuD. Requires [4Fe-4S] cluster as cofactor.

It carries out the reaction (2R,3S)-3-isopropylmalate = (2S)-2-isopropylmalate. It participates in amino-acid biosynthesis; L-leucine biosynthesis; L-leucine from 3-methyl-2-oxobutanoate: step 2/4. In terms of biological role, catalyzes the isomerization between 2-isopropylmalate and 3-isopropylmalate, via the formation of 2-isopropylmaleate. In Xanthomonas oryzae pv. oryzae (strain MAFF 311018), this protein is 3-isopropylmalate dehydratase large subunit.